The chain runs to 427 residues: 3-phosphoshikimate 1-carboxyvinyltransferase (427 aa).

The 3-phosphoshikimate site is built by K22, S23, and R27. K22 provides a ligand contact to phosphoenolpyruvate. Residues G96 and R124 each coordinate phosphoenolpyruvate. Positions 170, 171, 172, 198, 314, 337, and 341 each coordinate 3-phosphoshikimate. Q172 provides a ligand contact to phosphoenolpyruvate. D314 functions as the Proton acceptor in the catalytic mechanism. R345, R387, and K412 together coordinate phosphoenolpyruvate.

Belongs to the EPSP synthase family. Monomer.

The protein resides in the cytoplasm. It catalyses the reaction 3-phosphoshikimate + phosphoenolpyruvate = 5-O-(1-carboxyvinyl)-3-phosphoshikimate + phosphate. It functions in the pathway metabolic intermediate biosynthesis; chorismate biosynthesis; chorismate from D-erythrose 4-phosphate and phosphoenolpyruvate: step 6/7. In terms of biological role, catalyzes the transfer of the enolpyruvyl moiety of phosphoenolpyruvate (PEP) to the 5-hydroxyl of shikimate-3-phosphate (S3P) to produce enolpyruvyl shikimate-3-phosphate and inorganic phosphate. The chain is 3-phosphoshikimate 1-carboxyvinyltransferase from Sulfurovum sp. (strain NBC37-1).